The primary structure comprises 89 residues: Small ribosomal subunit protein bS20 (89 aa).

Over residues 1 to 11 the composition is skewed to polar residues; it reads MANIKSQIKRN. The tract at residues 1 to 22 is disordered; it reads MANIKSQIKRNLTNEKRRLRNK.

It belongs to the bacterial ribosomal protein bS20 family.

In terms of biological role, binds directly to 16S ribosomal RNA. The chain is Small ribosomal subunit protein bS20 from Frankia casuarinae (strain DSM 45818 / CECT 9043 / HFP020203 / CcI3).